The chain runs to 206 residues: Small ribosomal subunit protein uS4 (206 aa).

An S4 RNA-binding domain is found at 96-156; that stretch reads GRLDNVVYRM…EKAKKQSRVK (61 aa).

This sequence belongs to the universal ribosomal protein uS4 family. In terms of assembly, part of the 30S ribosomal subunit. Contacts protein S5. The interaction surface between S4 and S5 is involved in control of translational fidelity.

Functionally, one of the primary rRNA binding proteins, it binds directly to 16S rRNA where it nucleates assembly of the body of the 30S subunit. In terms of biological role, with S5 and S12 plays an important role in translational accuracy. The polypeptide is Small ribosomal subunit protein uS4 (Salmonella typhi).